The primary structure comprises 55 residues: Large ribosomal subunit protein bL33 (55 aa).

This sequence belongs to the bacterial ribosomal protein bL33 family.

The chain is Large ribosomal subunit protein bL33 from Maricaulis maris (strain MCS10) (Caulobacter maris).